The following is a 173-amino-acid chain: dCTP deaminase, dUMP-forming (173 aa).

DCTP contacts are provided by residues 93-98, Asp-111, 119-121, Gln-138, and Tyr-151; these read RSSTGR and TLE. The active-site Proton donor/acceptor is Glu-121.

The protein belongs to the dCTP deaminase family. Homotrimer.

It catalyses the reaction dCTP + 2 H2O = dUMP + NH4(+) + diphosphate. The protein operates within pyrimidine metabolism; dUMP biosynthesis; dUMP from dCTP: step 1/1. Bifunctional enzyme that catalyzes both the deamination of dCTP to dUTP and the hydrolysis of dUTP to dUMP without releasing the toxic dUTP intermediate. The protein is dCTP deaminase, dUMP-forming of Clostridium botulinum (strain Eklund 17B / Type B).